We begin with the raw amino-acid sequence, 212 residues long: Ribosomal RNA small subunit methyltransferase G (212 aa).

S-adenosyl-L-methionine-binding positions include G80, L85, 131 to 132 (AE), and R146.

Belongs to the methyltransferase superfamily. RNA methyltransferase RsmG family.

Its subcellular location is the cytoplasm. The catalysed reaction is guanosine(527) in 16S rRNA + S-adenosyl-L-methionine = N(7)-methylguanosine(527) in 16S rRNA + S-adenosyl-L-homocysteine. Functionally, specifically methylates the N7 position of guanine in position 527 of 16S rRNA. This Xanthomonas oryzae pv. oryzae (strain MAFF 311018) protein is Ribosomal RNA small subunit methyltransferase G.